Reading from the N-terminus, the 161-residue chain is Type II secretion system protein M (161 aa).

Topologically, residues 1–16 (MNELRRRWQVMSQRER) are cytoplasmic. Residues 17-37 (LMALACGGLVVLCLLYYLIWA) form a helical membrane-spanning segment. Residues 38–161 (PWQESVRQWQ…VTRLSLERVL (124 aa)) lie on the Periplasmic side of the membrane.

This sequence belongs to the GSP M family. In terms of assembly, type II secretion system is composed of four main components: the outer membrane complex, the inner membrane complex, the cytoplasmic secretion ATPase and the periplasm-spanning pseudopilus. Forms homodimers. Interacts with OutL/GspL. Interacts with OutE/GspE and OutF/GspF.

It localises to the cell inner membrane. Its function is as follows. Inner membrane component of the type II secretion system required for the energy-dependent secretion of extracellular factors such as proteases and toxins from the periplasm. Plays a role in the complex assembly and recruits OutL resulting in a stable complex in the inner membrane. Provides thus a link between the energy-providing OutE protein in the cytoplasm and the rest of the T2SS machinery. In Dickeya chrysanthemi (Pectobacterium chrysanthemi), this protein is Type II secretion system protein M (outM).